The primary structure comprises 166 residues: Large ribosomal subunit protein mL41 (166 aa).

The N-terminal 26 residues, 1-26, are a transit peptide targeting the mitochondrion; that stretch reads MNNCIKVVPIALRCQQRTISTSSVLE. The tract at residues 136 to 166 is disordered; that stretch reads KDGSAKEPSVNEQLTPEEALQRARKTGSDIF.

The protein belongs to the mitochondrion-specific ribosomal protein mL41 family. In terms of assembly, component of the mitochondrial ribosome large subunit (39S) which comprises a 16S rRNA and about 50 distinct proteins.

It localises to the mitochondrion. In Drosophila melanogaster (Fruit fly), this protein is Large ribosomal subunit protein mL41 (mRpL41).